The following is a 1528-amino-acid chain: Zinc finger FYVE domain-containing protein 16 (1528 aa).

Residue Ser-120 is modified to Phosphoserine. Positions 629–664 (TQAVGGARPKQLLSLPPGTRSSKELNKPDVVDVPES) are disordered. The span at 649–658 (SSKELNKPDV) shows a compositional bias: basic and acidic residues. The FYVE-type zinc finger occupies 735 to 793 (DSEAPNCMNCQVKFTFTKRRHHCRACGKVFCGVCCNRKCKLQYLEKEARVCVICYETIN). The Zn(2+) site is built by Cys-741, Cys-744, Cys-757, Cys-760, Cys-765, Cys-768, Cys-785, and Cys-788. Residues Ser-803, Ser-833, Ser-884, and Ser-927 each carry the phosphoserine modification. The tract at residues 819-849 (TDQPLQETQTSSTPSPTTLPISALKQPNVEG) is disordered. The segment covering 821–838 (QPLQETQTSSTPSPTTLP) has biased composition (low complexity). The tract at residues 928–949 (PTCHTAPVERLPGNTGTEGLPM) is disordered.

In terms of assembly, interacts (via C-terminus) with TOM1 (via C-terminus); interaction is required to target TOM1 to endosomes. Does not interact with TOM1L1 or TOM1L2.

The protein resides in the cytoplasm. It is found in the early endosome membrane. In terms of biological role, may be involved in regulating membrane trafficking in the endosomal pathway. Overexpression induces endosome aggregation. Required to target TOM1 to endosomes. The protein is Zinc finger FYVE domain-containing protein 16 (Zfyve16) of Mus musculus (Mouse).